The following is a 778-amino-acid chain: Lon protease (778 aa).

The region spanning 6 to 207 is the Lon N-terminal domain; it reads LPLMALRDMV…TVISTLTSNI (202 aa). 356–363 contributes to the ATP binding site; the sequence is GPPGVGKT. Residues 592–773 form the Lon proteolytic domain; sequence EDQIGSTTGL…DQVLKHALVE (182 aa). Active-site residues include Ser-679 and Lys-722.

The protein belongs to the peptidase S16 family. Homohexamer. Organized in a ring with a central cavity.

It is found in the cytoplasm. It carries out the reaction Hydrolysis of proteins in presence of ATP.. In terms of biological role, ATP-dependent serine protease that mediates the selective degradation of mutant and abnormal proteins as well as certain short-lived regulatory proteins. Required for cellular homeostasis and for survival from DNA damage and developmental changes induced by stress. Degrades polypeptides processively to yield small peptide fragments that are 5 to 10 amino acids long. Binds to DNA in a double-stranded, site-specific manner. The protein is Lon protease of Rickettsia felis (strain ATCC VR-1525 / URRWXCal2) (Rickettsia azadi).